We begin with the raw amino-acid sequence, 840 residues long: Heat shock 70 kDa protein 4 (840 aa).

An N6-acetyllysine modification is found at lysine 53. At serine 76 the chain carries Phosphoserine. 2 positions are modified to phosphotyrosine: tyrosine 89 and tyrosine 336. A phosphoserine mark is found at serine 393 and serine 415. N6-acetyllysine is present on lysine 430. A disordered region spans residues 500-575 (VHKSEESEEP…QAKKAKVKTS (76 aa)). Over residues 514–533 (QNAKEEEKMQVDQEEPHTEE) the composition is skewed to basic and acidic residues. Threonine 538 is subject to Phosphothreonine. Serine 546 carries the phosphoserine modification. Tyrosine 660 is modified (phosphotyrosine). The residue at position 756 (serine 756) is a Phosphoserine. Lysine 773 is subject to N6-methyllysine. Residues 781-840 (PIISKPKPKVEPPKEEPKHAEQNGPVDGQGDNPGTQAAEHGADTAVPSDGDKKLPEMDID) form a disordered region. Composition is skewed to basic and acidic residues over residues 788–801 (PKVEPPKEEPKHAE) and 829–840 (DGDKKLPEMDID).

This sequence belongs to the heat shock protein 70 family. Interacts with TJP1/ZO-1. Ubiquitous. Highly expressed in testis.

Its subcellular location is the cytoplasm. The sequence is that of Heat shock 70 kDa protein 4 (Hspa4) from Rattus norvegicus (Rat).